The primary structure comprises 380 residues: 3-dehydroquinate synthase (380 aa).

Belongs to the archaeal-type DHQ synthase family.

The enzyme catalyses 2-amino-2,3,7-trideoxy-D-lyxo-hept-6-ulosonate + NAD(+) + H2O = 3-dehydroquinate + NH4(+) + NADH + H(+). Catalyzes the oxidative deamination and cyclization of 2-amino-3,7-dideoxy-D-threo-hept-6-ulosonic acid (ADH) to yield 3-dehydroquinate (DHQ), which is fed into the canonical shikimic pathway of aromatic amino acid biosynthesis. In Methanosarcina mazei (strain ATCC BAA-159 / DSM 3647 / Goe1 / Go1 / JCM 11833 / OCM 88) (Methanosarcina frisia), this protein is 3-dehydroquinate synthase.